The primary structure comprises 319 residues: tRNA(Ile)-lysidine synthase (319 aa).

Position 32–37 (32–37) interacts with ATP; the sequence is SGGSDS.

It belongs to the tRNA(Ile)-lysidine synthase family.

The protein resides in the cytoplasm. It carries out the reaction cytidine(34) in tRNA(Ile2) + L-lysine + ATP = lysidine(34) in tRNA(Ile2) + AMP + diphosphate + H(+). In terms of biological role, ligates lysine onto the cytidine present at position 34 of the AUA codon-specific tRNA(Ile) that contains the anticodon CAU, in an ATP-dependent manner. Cytidine is converted to lysidine, thus changing the amino acid specificity of the tRNA from methionine to isoleucine. The polypeptide is tRNA(Ile)-lysidine synthase (Chlamydia pneumoniae (Chlamydophila pneumoniae)).